Consider the following 640-residue polypeptide: Arogenate dehydrogenase 1, chloroplastic (640 aa).

Residues 1 to 18 (MAETLITKPPLSLSFTSL) constitute a chloroplast transit peptide. 2 consecutive Prephenate/arogenate dehydrogenase domains span residues 53–334 (LRIA…GEND) and 365–640 (LKIG…LLTS).

It belongs to the prephenate/arogenate dehydrogenase family. In terms of tissue distribution, expressed in roots, stems, leaves, flowers, siliques and seeds. More abundant in seeds.

The protein localises to the plastid. Its subcellular location is the chloroplast. The catalysed reaction is L-arogenate + NADP(+) = L-tyrosine + CO2 + NADPH. The protein operates within amino-acid biosynthesis; L-tyrosine biosynthesis; L-tyrosine from L-arogenate (NADP(+) route): step 1/1. In terms of biological role, involved in the biosynthesis of tyrosine. Has no prephenate dehydrogenase activity. This chain is Arogenate dehydrogenase 1, chloroplastic (TYRAAT1), found in Arabidopsis thaliana (Mouse-ear cress).